Consider the following 721-residue polypeptide: MASNEASTSAAGSGPESAALFSKLRSFSIGSGPNSPQRVVSNLRGFLTHRLSNITPSDTGWKDSILSIPKKWLSTAESVDEFGFPDTLPKVPVPALDETMADYIRALEPITTPAQLERTKELIRQFSAPQGIGARLHQYLLDKREAEDNWAYYYWLNEMYMDIRIPLPINSNPGMVFPPRRFKTVHDVAHFAARLLDGILSHREMLDSGELPLERAASREKNQPLCMAQYYRLLGSCRRPGVKQDSQFLPSRERLNDEDRHVVVICRNQMYCVVLQASDRGKLSESEIASQILYVLSDAPCLPAKPVPVGLLTAEPRSTWARDREMLQEDERNQRNLELIETAQVVLCLDEPLAGNFNARGFTGATPTVHRAGDRDETNMAHEMIHGGGSEYNSGNRWFDKTMQLIICTDGTWGLCYEHSCSEGIAVVQLLEKIYKKIEEHPDEDNGLPQHHLPPPERLEWHVGPQLQLRFAQASKSVDKCIDDLDFYVYRYQSYGKTFIKSCQVSPDVYIQLALQLAHYKLYGRLVATYESASTRRFLHGRVDCIRAASTEALEWAKAMCQGEGANVPLESDREDEEESRKVKFSIYSKDHLRELFRCAVARQTEVMVKNILGNGIDIPLLGLREASIEVTGEMHELFKDESYIISQCFLLSTSQVACSTDSFMGYGPVTPRGYGCSYNPHPEQIVFCVSAFYSCEDTSASRYAKSLQDSLDIMRDLLQN.

His-419 functions as the Proton acceptor in the catalytic mechanism. CoA is bound by residues 496-508 (GKTFIKSCQVSPD), Ser-534, and Gln-656.

This sequence belongs to the carnitine/choline acetyltransferase family. The 54 kDa and 13 kDa chains exist as a heterodimer. Post-translationally, the N-terminus of choline O-acetyltransferase 67 kDa and 54 kDa chains are blocked.

It carries out the reaction choline + acetyl-CoA = acetylcholine + CoA. Its function is as follows. Catalyzes the reversible synthesis of acetylcholine (ACh) from acetyl CoA and choline at cholinergic synapses. This chain is Choline O-acetyltransferase, found in Drosophila melanogaster (Fruit fly).